The primary structure comprises 112 residues: UPF0102 protein NIS_1551 (112 aa).

It belongs to the UPF0102 family.

The protein is UPF0102 protein NIS_1551 of Nitratiruptor sp. (strain SB155-2).